The chain runs to 296 residues: Aspartate carbamoyltransferase catalytic subunit (296 aa).

The carbamoyl phosphate site is built by Arg50 and Thr51. Lys79 contributes to the L-aspartate binding site. Carbamoyl phosphate is bound by residues Arg100, His128, and Gln131. Arg161 and Arg219 together coordinate L-aspartate. The carbamoyl phosphate site is built by Leu258 and Pro259.

It belongs to the aspartate/ornithine carbamoyltransferase superfamily. ATCase family. In terms of assembly, heterooligomer of catalytic and regulatory chains.

It carries out the reaction carbamoyl phosphate + L-aspartate = N-carbamoyl-L-aspartate + phosphate + H(+). It functions in the pathway pyrimidine metabolism; UMP biosynthesis via de novo pathway; (S)-dihydroorotate from bicarbonate: step 2/3. Catalyzes the condensation of carbamoyl phosphate and aspartate to form carbamoyl aspartate and inorganic phosphate, the committed step in the de novo pyrimidine nucleotide biosynthesis pathway. The chain is Aspartate carbamoyltransferase catalytic subunit from Korarchaeum cryptofilum (strain OPF8).